Here is an 875-residue protein sequence, read N- to C-terminus: Serine/threonine-protein kinase ATG1 (875 aa).

The Protein kinase domain occupies 22 to 318 (YSIGPEIGKG…FNEFFNDPLI (297 aa)). Residues 28–36 (IGKGSFATV) and Lys51 contribute to the ATP site. The active-site Proton acceptor is the Asp168. The span at 367–379 (EKSKQDLPAREVS) shows a compositional bias: basic and acidic residues. 2 disordered regions span residues 367 to 422 (EKSK…QPHN) and 470 to 515 (INPR…DRRI). A compositionally biased stretch (polar residues) spans 380–389 (THASESQTKA). A compositionally biased stretch (basic and acidic residues) spans 390–405 (VDTRPSSRDEEIKEII). Polar residues-rich tracts occupy residues 406 to 420 (NKNSPGPETSRSIQP), 473 to 490 (RRTSSGSDNSYNGPNNMQ), and 497 to 508 (LRSNSSGSQRRP).

The protein belongs to the protein kinase superfamily. Ser/Thr protein kinase family. APG1/unc-51/ULK1 subfamily. Homodimer. Forms a ternary complex with ATG13 and ATG17.

It is found in the cytoplasm. Its subcellular location is the preautophagosomal structure membrane. It catalyses the reaction L-seryl-[protein] + ATP = O-phospho-L-seryl-[protein] + ADP + H(+). It carries out the reaction L-threonyl-[protein] + ATP = O-phospho-L-threonyl-[protein] + ADP + H(+). Serine/threonine protein kinase involved in the cytoplasm to vacuole transport (Cvt) and found to be essential in autophagy, where it is required for the formation of autophagosomes. Involved in the clearance of protein aggregates which cannot be efficiently cleared by the proteasome. Required for selective autophagic degradation of the nucleus (nucleophagy) as well as for mitophagy which contributes to regulate mitochondrial quantity and quality by eliminating the mitochondria to a basal level to fulfill cellular energy requirements and preventing excess ROS production. Also involved in endoplasmic reticulum-specific autophagic process, in selective removal of ER-associated degradation (ERAD) substrates. Plays a key role in ATG9 and ATG23 cycling through the pre-autophagosomal structure and is necessary to promote ATG18 binding to ATG9 through phosphorylation of ATG9. Catalyzes phosphorylation of ATG4, decreasing the interaction between ATG4 and ATG8 and impairing deconjugation of PE-conjugated forms of ATG8. This chain is Serine/threonine-protein kinase ATG1, found in Debaryomyces hansenii (strain ATCC 36239 / CBS 767 / BCRC 21394 / JCM 1990 / NBRC 0083 / IGC 2968) (Yeast).